The sequence spans 109 residues: Spermidine export protein MdtI (109 aa).

4 consecutive transmembrane segments (helical) span residues 6–26, 36–56, 63–83, and 88–108; these read WWHA…NILL, WMGI…AQAV, IAYA…GWIM, and LNYK…MIKM.

This sequence belongs to the drug/metabolite transporter (DMT) superfamily. Small multidrug resistance (SMR) (TC 2.A.7.1) family. MdtI subfamily. Forms a complex with MdtJ.

Its subcellular location is the cell inner membrane. In terms of biological role, catalyzes the excretion of spermidine. In Photorhabdus laumondii subsp. laumondii (strain DSM 15139 / CIP 105565 / TT01) (Photorhabdus luminescens subsp. laumondii), this protein is Spermidine export protein MdtI.